Reading from the N-terminus, the 39-residue chain is Photosystem II reaction center protein I (39 aa).

A helical transmembrane segment spans residues 6-26; sequence ISVYSVVFFFIGIFMFGFLAS.

Belongs to the PsbI family. In terms of assembly, PSII is composed of 1 copy each of membrane proteins PsbA, PsbB, PsbC, PsbD, PsbE, PsbF, PsbH, PsbI, PsbJ, PsbK, PsbL, PsbM, PsbT, PsbX, PsbY, PsbZ, Psb30/Ycf12, peripheral proteins PsbO, CyanoQ (PsbQ), PsbU, PsbV and a large number of cofactors. It forms dimeric complexes.

The protein localises to the cellular thylakoid membrane. Functionally, one of the components of the core complex of photosystem II (PSII), required for its stability and/or assembly. PSII is a light-driven water:plastoquinone oxidoreductase that uses light energy to abstract electrons from H(2)O, generating O(2) and a proton gradient subsequently used for ATP formation. It consists of a core antenna complex that captures photons, and an electron transfer chain that converts photonic excitation into a charge separation. The chain is Photosystem II reaction center protein I from Synechococcus sp. (strain RCC307).